Here is a 457-residue protein sequence, read N- to C-terminus: Exodeoxyribonuclease 7 large subunit (457 aa).

The protein belongs to the XseA family. In terms of assembly, heterooligomer composed of large and small subunits.

The protein localises to the cytoplasm. The catalysed reaction is Exonucleolytic cleavage in either 5'- to 3'- or 3'- to 5'-direction to yield nucleoside 5'-phosphates.. Its function is as follows. Bidirectionally degrades single-stranded DNA into large acid-insoluble oligonucleotides, which are then degraded further into small acid-soluble oligonucleotides. The protein is Exodeoxyribonuclease 7 large subunit of Citrobacter koseri (strain ATCC BAA-895 / CDC 4225-83 / SGSC4696).